Consider the following 331-residue polypeptide: Phosphate acyltransferase (331 aa).

This sequence belongs to the PlsX family. As to quaternary structure, homodimer. Probably interacts with PlsY.

It localises to the cytoplasm. It catalyses the reaction a fatty acyl-[ACP] + phosphate = an acyl phosphate + holo-[ACP]. It participates in lipid metabolism; phospholipid metabolism. Functionally, catalyzes the reversible formation of acyl-phosphate (acyl-PO(4)) from acyl-[acyl-carrier-protein] (acyl-ACP). This enzyme utilizes acyl-ACP as fatty acyl donor, but not acyl-CoA. The sequence is that of Phosphate acyltransferase from Malacoplasma penetrans (strain HF-2) (Mycoplasma penetrans).